The chain runs to 436 residues: D-aminoacyl-tRNA deacylase (436 aa).

It belongs to the DtdA deacylase family. As to quaternary structure, monomer. The cofactor is Zn(2+).

The catalysed reaction is a D-aminoacyl-tRNA + H2O = a tRNA + a D-alpha-amino acid + H(+). It catalyses the reaction glycyl-tRNA(Ala) + H2O = tRNA(Ala) + glycine + H(+). In terms of biological role, D-aminoacyl-tRNA deacylase with broad substrate specificity. By recycling D-aminoacyl-tRNA to D-amino acids and free tRNA molecules, this enzyme counteracts the toxicity associated with the formation of D-aminoacyl-tRNA entities in vivo. This Methanoregula boonei (strain DSM 21154 / JCM 14090 / 6A8) protein is D-aminoacyl-tRNA deacylase.